A 459-amino-acid polypeptide reads, in one-letter code: Protein phosphatase 1M (459 aa).

Over residues 1-10 the composition is skewed to basic residues; it reads MSAGWFRRRF. Residues 1–64 form a disordered region; it reads MSAGWFRRRF…SRPVRSPARG (64 aa). Residues 14–27 show a composition bias toward pro residues; sequence EPLPAPRPPGPHAS. Residues 38-48 are compositionally biased toward low complexity; the sequence is RGSSSSPGAAD. Mn(2+)-binding residues include aspartate 125 and glycine 126. In terms of domain architecture, PPM-type phosphatase spans 162–459; that stretch reads MHLNGRCICP…HSQGQESSDH (298 aa).

The protein belongs to the PP2C family. Mg(2+) is required as a cofactor. The cofactor is Mn(2+).

Its subcellular location is the nucleus. It carries out the reaction O-phospho-L-seryl-[protein] + H2O = L-seryl-[protein] + phosphate. The catalysed reaction is O-phospho-L-threonyl-[protein] + H2O = L-threonyl-[protein] + phosphate. This chain is Protein phosphatase 1M (PPM1M), found in Homo sapiens (Human).